Here is a 942-residue protein sequence, read N- to C-terminus: Isoleucine--tRNA ligase (942 aa).

Residues P58–H68 carry the 'HIGH' region motif. Position 566 (E566) interacts with L-isoleucyl-5'-AMP. A 'KMSKS' region motif is present at residues K607–S611. K610 contributes to the ATP binding site. Positions 905, 908, 925, and 928 each coordinate Zn(2+).

This sequence belongs to the class-I aminoacyl-tRNA synthetase family. IleS type 1 subfamily. As to quaternary structure, monomer. Zn(2+) serves as cofactor.

It localises to the cytoplasm. It catalyses the reaction tRNA(Ile) + L-isoleucine + ATP = L-isoleucyl-tRNA(Ile) + AMP + diphosphate. Its function is as follows. Catalyzes the attachment of isoleucine to tRNA(Ile). As IleRS can inadvertently accommodate and process structurally similar amino acids such as valine, to avoid such errors it has two additional distinct tRNA(Ile)-dependent editing activities. One activity is designated as 'pretransfer' editing and involves the hydrolysis of activated Val-AMP. The other activity is designated 'posttransfer' editing and involves deacylation of mischarged Val-tRNA(Ile). The polypeptide is Isoleucine--tRNA ligase (Pseudoalteromonas atlantica (strain T6c / ATCC BAA-1087)).